The sequence spans 189 residues: H/ACA ribonucleoprotein complex subunit 1-like protein 2 (189 aa).

Over residues M1–G12 the composition is skewed to gly residues. Disordered regions lie at residues M1–E39 and R129–A189. Residues G162–G177 are compositionally biased toward low complexity.

It belongs to the GAR1 family. Component of the small nucleolar ribonucleoprotein particle containing H/ACA-type snoRNAs (H/ACA snoRNPs).

It localises to the nucleus. The protein resides in the nucleolus. Its function is as follows. Required for ribosome biogenesis. Part of a complex which catalyzes pseudouridylation of rRNA. This involves the isomerization of uridine such that the ribose is subsequently attached to C5, instead of the normal N1. Pseudouridine ('psi') residues may serve to stabilize the conformation of rRNAs. This chain is H/ACA ribonucleoprotein complex subunit 1-like protein 2, found in Arabidopsis thaliana (Mouse-ear cress).